Reading from the N-terminus, the 603-residue chain is Granule-bound starch synthase 1, chloroplastic/amyloplastic (603 aa).

Residues 1 to 75 (MATITGSSMP…SEKSLGKIVC (75 aa)) constitute a chloroplast transit peptide. Lys-91 contributes to the ADP-alpha-D-glucose binding site.

Belongs to the glycosyltransferase 1 family. Bacterial/plant glycogen synthase subfamily. In terms of tissue distribution, expressed in pods and leaves. No expression in flowers or stipules.

It is found in the plastid. The protein resides in the chloroplast. The protein localises to the amyloplast. The enzyme catalyses an NDP-alpha-D-glucose + [(1-&gt;4)-alpha-D-glucosyl](n) = [(1-&gt;4)-alpha-D-glucosyl](n+1) + a ribonucleoside 5'-diphosphate + H(+). Its pathway is glycan biosynthesis; starch biosynthesis. May be responsible for the synthesis of amylose. This is Granule-bound starch synthase 1, chloroplastic/amyloplastic from Pisum sativum (Garden pea).